The primary structure comprises 167 residues: UPF0254 protein MJ1251 (167 aa).

The protein belongs to the UPF0254 family.

This Methanocaldococcus jannaschii (strain ATCC 43067 / DSM 2661 / JAL-1 / JCM 10045 / NBRC 100440) (Methanococcus jannaschii) protein is UPF0254 protein MJ1251.